The following is a 102-amino-acid chain: UPF0045 protein Mb1933 (102 aa).

Belongs to the UPF0045 family.

The chain is UPF0045 protein Mb1933 from Mycobacterium bovis (strain ATCC BAA-935 / AF2122/97).